The following is a 287-amino-acid chain: 4-hydroxybenzoate octaprenyltransferase (287 aa).

Transmembrane regions (helical) follow at residues 21–39 (PIGTLLLLWPTLWALWLAA), 95–115 (VLALFAVLALISFALVLTMNP), 116–136 (LTIGLSFAALLLAVCYPFMKR), 138–158 (IPIPQLVLGMAFSWSIPMAYA), 161–181 (ANALPAVAWLVFLANLLWTIA), 213–233 (IIGALQLLTLLILLLVGQLSE), 234–251 (LGSSYYWSLLAAAALFVY), and 264–284 (CFQAFLNNNYVGALIFAGVVI).

The protein belongs to the UbiA prenyltransferase family. It depends on Mg(2+) as a cofactor.

The protein resides in the cell inner membrane. It carries out the reaction all-trans-octaprenyl diphosphate + 4-hydroxybenzoate = 4-hydroxy-3-(all-trans-octaprenyl)benzoate + diphosphate. It functions in the pathway cofactor biosynthesis; ubiquinone biosynthesis. Catalyzes the prenylation of para-hydroxybenzoate (PHB) with an all-trans polyprenyl group. Mediates the second step in the final reaction sequence of ubiquinone-8 (UQ-8) biosynthesis, which is the condensation of the polyisoprenoid side chain with PHB, generating the first membrane-bound Q intermediate 3-octaprenyl-4-hydroxybenzoate. The protein is 4-hydroxybenzoate octaprenyltransferase of Aeromonas hydrophila subsp. hydrophila (strain ATCC 7966 / DSM 30187 / BCRC 13018 / CCUG 14551 / JCM 1027 / KCTC 2358 / NCIMB 9240 / NCTC 8049).